The following is a 227-amino-acid chain: 2-phospho-L-lactate guanylyltransferase (227 aa).

The protein belongs to the CofC family. Homodimer.

It carries out the reaction (2S)-2-phospholactate + GTP + H(+) = (2S)-lactyl-2-diphospho-5'-guanosine + diphosphate. Its pathway is cofactor biosynthesis; coenzyme F420 biosynthesis. Its function is as follows. Guanylyltransferase that catalyzes the activation of (2S)-2-phospholactate (2-PL) as (2S)-lactyl-2-diphospho-5'-guanosine, via the condensation of 2-PL with GTP. It is involved in the biosynthesis of coenzyme F420, a hydride carrier cofactor. This Methanocaldococcus sp. (strain FS406-22) protein is 2-phospho-L-lactate guanylyltransferase.